The following is a 363-amino-acid chain: MKQVMFYCRSGFEKECAGEIQDKATQLEVFGFPRLKSNTGYVLFECYQEGDADKLIQQIKFNELIFARQMFAVATELSDLPTEDRISPILNALSSVEGVPHCGDIRIETPDTNEAKELLKFCRKFTVPLRQALRGKQMLTARDTDRIPVMHVCFIEPGHCYVGYSYTNNNSKFFMGIPRLKFPSDSPSRSTLKLEEAFHVFIPRDEWDTRLASGMWAVDLGACPGGWTYQLVKRSMFVHAIDNGMMAQSLMDTGQVKHHMVDGFKFEPQRKNVTWIVCDMIEKPARVAHLMGEWLIKGWAKEALFNLKLPMKGRYDEVLQDIENLKEFLNKNGFKYKLQAKHLYHDREEITVHIQAITNISPH.

S-adenosyl-L-methionine-binding positions include Ser-190, 223–226 (CPGG), Asp-242, Asp-262, and Asp-279. The active-site Proton acceptor is Lys-308.

This sequence belongs to the class I-like SAM-binding methyltransferase superfamily. RNA methyltransferase RlmE family. RlmM subfamily. In terms of assembly, monomer.

It localises to the cytoplasm. It catalyses the reaction cytidine(2498) in 23S rRNA + S-adenosyl-L-methionine = 2'-O-methylcytidine(2498) in 23S rRNA + S-adenosyl-L-homocysteine + H(+). Catalyzes the 2'-O-methylation at nucleotide C2498 in 23S rRNA. The chain is Ribosomal RNA large subunit methyltransferase M from Aliivibrio salmonicida (strain LFI1238) (Vibrio salmonicida (strain LFI1238)).